Here is a 213-residue protein sequence, read N- to C-terminus: ATP phosphoribosyltransferase (213 aa).

Belongs to the ATP phosphoribosyltransferase family. Short subfamily. In terms of assembly, heteromultimer composed of HisG and HisZ subunits.

Its subcellular location is the cytoplasm. The catalysed reaction is 1-(5-phospho-beta-D-ribosyl)-ATP + diphosphate = 5-phospho-alpha-D-ribose 1-diphosphate + ATP. The protein operates within amino-acid biosynthesis; L-histidine biosynthesis; L-histidine from 5-phospho-alpha-D-ribose 1-diphosphate: step 1/9. Functionally, catalyzes the condensation of ATP and 5-phosphoribose 1-diphosphate to form N'-(5'-phosphoribosyl)-ATP (PR-ATP). Has a crucial role in the pathway because the rate of histidine biosynthesis seems to be controlled primarily by regulation of HisG enzymatic activity. This chain is ATP phosphoribosyltransferase, found in Thermoanaerobacter pseudethanolicus (strain ATCC 33223 / 39E) (Clostridium thermohydrosulfuricum).